Here is a 250-residue protein sequence, read N- to C-terminus: Peptidyl-tRNA hydrolase (250 aa).

Residue Tyr14 participates in tRNA binding. His19 functions as the Proton acceptor in the catalytic mechanism. TRNA-binding residues include Phe64, Asn66, and Asn112. The disordered stretch occupies residues 192-250 (MGDGNQRPGGVKTDPAQLEKAPPKAQSHIRQARQNQKKPNIPESGPMAEMLKKLLGKKD). A compositionally biased stretch (polar residues) spans 219–229 (HIRQARQNQKK). The span at 241 to 250 (MLKKLLGKKD) shows a compositional bias: basic and acidic residues.

Belongs to the PTH family. In terms of assembly, monomer.

The protein localises to the cytoplasm. It catalyses the reaction an N-acyl-L-alpha-aminoacyl-tRNA + H2O = an N-acyl-L-amino acid + a tRNA + H(+). In terms of biological role, hydrolyzes ribosome-free peptidyl-tRNAs (with 1 or more amino acids incorporated), which drop off the ribosome during protein synthesis, or as a result of ribosome stalling. Functionally, catalyzes the release of premature peptidyl moieties from peptidyl-tRNA molecules trapped in stalled 50S ribosomal subunits, and thus maintains levels of free tRNAs and 50S ribosomes. The polypeptide is Peptidyl-tRNA hydrolase (Brucella suis (strain ATCC 23445 / NCTC 10510)).